A 410-amino-acid polypeptide reads, in one-letter code: Arginine biosynthesis bifunctional protein ArgJ (410 aa).

Thr158, Lys184, Thr195, Glu282, Asn405, and Ser410 together coordinate substrate. Thr195 functions as the Nucleophile in the catalytic mechanism.

Belongs to the ArgJ family. As to quaternary structure, heterotetramer of two alpha and two beta chains.

It localises to the cytoplasm. The catalysed reaction is N(2)-acetyl-L-ornithine + L-glutamate = N-acetyl-L-glutamate + L-ornithine. It catalyses the reaction L-glutamate + acetyl-CoA = N-acetyl-L-glutamate + CoA + H(+). Its pathway is amino-acid biosynthesis; L-arginine biosynthesis; L-ornithine and N-acetyl-L-glutamate from L-glutamate and N(2)-acetyl-L-ornithine (cyclic): step 1/1. It participates in amino-acid biosynthesis; L-arginine biosynthesis; N(2)-acetyl-L-ornithine from L-glutamate: step 1/4. Functionally, catalyzes two activities which are involved in the cyclic version of arginine biosynthesis: the synthesis of N-acetylglutamate from glutamate and acetyl-CoA as the acetyl donor, and of ornithine by transacetylation between N(2)-acetylornithine and glutamate. The chain is Arginine biosynthesis bifunctional protein ArgJ from Bartonella henselae (strain ATCC 49882 / DSM 28221 / CCUG 30454 / Houston 1) (Rochalimaea henselae).